The chain runs to 655 residues: tRNA uridine 5-carboxymethylaminomethyl modification enzyme MnmG (655 aa).

Glycine 13–glycine 18 contributes to the FAD binding site. NAD(+) is bound at residue glycine 281–phenylalanine 295.

Belongs to the MnmG family. In terms of assembly, homodimer. Heterotetramer of two MnmE and two MnmG subunits. It depends on FAD as a cofactor.

Its subcellular location is the cytoplasm. In terms of biological role, NAD-binding protein involved in the addition of a carboxymethylaminomethyl (cmnm) group at the wobble position (U34) of certain tRNAs, forming tRNA-cmnm(5)s(2)U34. The polypeptide is tRNA uridine 5-carboxymethylaminomethyl modification enzyme MnmG (Paracidovorax citrulli (strain AAC00-1) (Acidovorax citrulli)).